The following is a 550-amino-acid chain: Arginine--tRNA ligase (550 aa).

Positions 122 to 132 (GNPTGPLHLAH) match the 'HIGH' region motif.

Belongs to the class-I aminoacyl-tRNA synthetase family. Monomer.

It is found in the cytoplasm. It carries out the reaction tRNA(Arg) + L-arginine + ATP = L-arginyl-tRNA(Arg) + AMP + diphosphate. This is Arginine--tRNA ligase from Tropheryma whipplei (strain TW08/27) (Whipple's bacillus).